A 224-amino-acid polypeptide reads, in one-letter code: MSTWGQMNLMDPASPIQIEMMLFHDHAMAILIGIFTLVSCLGVKLCFNTLSTRTMHEAQLLETLWTILPAFLLVWLALPSLRLLYLLDEQSSEGIVLKAIGHQWYWSYEMPSMNVSSIDSYMIPEDDLKPGEYRLLEVDNRPTVPYGMDINVIATSADVIHAWALPSMGVKMDAVPGRLNSMGFHANLPGIYYGQCSEICGANHSFMPIAIEAVDVKDFINMCN.

Over 1 to 26 (MSTWGQMNLMDPASPIQIEMMLFHDH) the chain is Mitochondrial intermembrane. A helical transmembrane segment spans residues 27 to 48 (AMAILIGIFTLVSCLGVKLCFN). The Mitochondrial matrix portion of the chain corresponds to 49–62 (TLSTRTMHEAQLLE). Residues 63-82 (TLWTILPAFLLVWLALPSLR) traverse the membrane as a helical segment. Residues 83-224 (LLYLLDEQSS…DVKDFINMCN (142 aa)) lie on the Mitochondrial intermembrane side of the membrane. The Cu cation site is built by His-161, Cys-196, Glu-198, Cys-200, His-204, and Met-207. A Mg(2+)-binding site is contributed by Glu-198.

The protein belongs to the cytochrome c oxidase subunit 2 family. As to quaternary structure, component of the cytochrome c oxidase (complex IV, CIV), a multisubunit enzyme composed of a catalytic core of 3 subunits and several supernumerary subunits. The complex exists as a monomer or a dimer and forms supercomplexes (SCs) in the inner mitochondrial membrane with ubiquinol-cytochrome c oxidoreductase (cytochrome b-c1 complex, complex III, CIII). The cofactor is Cu cation.

It is found in the mitochondrion inner membrane. The catalysed reaction is 4 Fe(II)-[cytochrome c] + O2 + 8 H(+)(in) = 4 Fe(III)-[cytochrome c] + 2 H2O + 4 H(+)(out). Functionally, component of the cytochrome c oxidase, the last enzyme in the mitochondrial electron transport chain which drives oxidative phosphorylation. The respiratory chain contains 3 multisubunit complexes succinate dehydrogenase (complex II, CII), ubiquinol-cytochrome c oxidoreductase (cytochrome b-c1 complex, complex III, CIII) and cytochrome c oxidase (complex IV, CIV), that cooperate to transfer electrons derived from NADH and succinate to molecular oxygen, creating an electrochemical gradient over the inner membrane that drives transmembrane transport and the ATP synthase. Cytochrome c oxidase is the component of the respiratory chain that catalyzes the reduction of oxygen to water. Electrons originating from reduced cytochrome c in the intermembrane space (IMS) are transferred via the dinuclear copper A center (CU(A)) of subunit 2 and heme A of subunit 1 to the active site in subunit 1, a binuclear center (BNC) formed by heme A3 and copper B (CU(B)). The BNC reduces molecular oxygen to 2 water molecules using 4 electrons from cytochrome c in the IMS and 4 protons from the mitochondrial matrix. This Albinaria turrita (Door snail) protein is Cytochrome c oxidase subunit 2 (COII).